A 233-amino-acid polypeptide reads, in one-letter code: Ribonuclease HII (233 aa).

An RNase H type-2 domain is found at 21–211 (KIIAGVDEVG…LDALPQWRHL (191 aa)). A divalent metal cation-binding residues include Asp27, Glu28, and Asp119.

Belongs to the RNase HII family. It depends on Mn(2+) as a cofactor. The cofactor is Mg(2+).

The protein resides in the cytoplasm. The enzyme catalyses Endonucleolytic cleavage to 5'-phosphomonoester.. Its function is as follows. Endonuclease that specifically degrades the RNA of RNA-DNA hybrids. The protein is Ribonuclease HII (rnhB) of Streptomyces coelicolor (strain ATCC BAA-471 / A3(2) / M145).